A 2871-amino-acid chain; its full sequence is Desmoplakin (2871 aa).

The tract at residues 1–584 (MSCNGGSHPR…DYMKTIADLE (584 aa)) is interaction with PKP1, JUP, PKP2. The interval 1–1056 (MSCNGGSHPR…ANSENCNKNK (1056 aa)) is globular 1. 2 positions are modified to phosphoserine: Ser-22 and Ser-53. Tyr-56 is modified (phosphotyrosine). Thr-61 carries the post-translational modification Phosphothreonine. Phosphoserine occurs at positions 165, 166, and 176. Spectrin repeat units lie at residues 178–271 (SGWD…HLRQ) and 272–375 (LQNI…LKEN). Residues 376–446 (AAYFQFFEEA…NLVNKSKKIV (71 aa)) form a Spectrin 3a repeat. The SH3 domain maps to 458–515 (NKPIILRALCDYKQDQKIVHKGDECILKDNNERSKWYVTGPGGVDMLVPSVGLIIPPP). A Spectrin 3b repeat occupies 516–545 (NPLAVDLSCKIEQYYEAILALWNQLYINMK). Spectrin repeat units lie at residues 546-627 (SLVS…IQLP), 654-769 (VIET…SLCT), and 770-883 (VRAL…DLEK). Residues 1018–1945 (SEMLKSLEDL…QREIDKLRQR (928 aa)) are a coiled coil. The interval 1057 to 1945 (FLDQNLQKYQ…QREIDKLRQR (889 aa)) is central fibrous rod domain. Phosphoserine occurs at positions 1658, 1708, and 2024. The tract at residues 1946–2871 (PYGSHRETQT…YSFSSSSIGH (926 aa)) is globular 2. Residues 1960–2208 (TVDTSKLVFD…LLLSVQKRSM (249 aa)) are 4.5 X 38 AA tandem repeats (Domain A). Plectin repeat units lie at residues 2009-2045 (QPFL…PEST), 2046-2083 (VMLL…FDDR), 2084-2121 (QQIY…RETG), 2122-2159 (MRLL…RDLY), 2163-2197 (NDPR…PHTG), 2198-2233 (LLLL…PSTV), 2251-2288 (KDFL…PGTA), 2289-2326 (LELL…IEFK), 2327-2364 (EKLL…KGHG), 2365-2402 (IRLL…EELS), 2406-2440 (SDPS…EETG), 2456-2493 (SQKN…YETF), 2507-2544 (TITG…RKFF), 2610-2647 (SDTL…SITG), 2648-2685 (QRLL…QDMA), 2724-2761 (QRFL…GRAA), and 2762-2799 (QRLQ…DITG). Phosphoserine occurs at positions 2207, 2209, and 2225. Residues 2244–2446 (DEVGERIKDF…EETGLCLLPL (203 aa)) form a 4.5 X 38 AA tandem repeats (Domain B) region. Residues 2609 to 2822 (FSDTLEESSP…LPSPYNMSSA (214 aa)) are 4.5 X 38 AA tandem repeats (Domain C). Phosphoserine occurs at positions 2810 and 2815. Over residues 2810 to 2823 (SKGLPSPYNMSSAP) the composition is skewed to polar residues. Residues 2810 to 2871 (SKGLPSPYNM…YSFSSSSIGH (62 aa)) are disordered. Residue Tyr-2817 is modified to Phosphotyrosine. Ser-2820, Ser-2821, and Ser-2825 each carry phosphoserine. The segment at 2824 to 2847 (GSRSGSRSGSRSGSRSGSRSGSRR) is 6 X 4 AA tandem repeats of G-S-R-[SR]. Residues 2824 to 2847 (GSRSGSRSGSRSGSRSGSRSGSRR) show a composition bias toward low complexity. An omega-N-methylarginine mark is found at Arg-2826 and Arg-2847. A Phosphoserine modification is found at Ser-2849. Residue Thr-2853 is modified to Phosphothreonine. Over residues 2856-2871 (SSYSYSYSFSSSSIGH) the composition is skewed to low complexity. Phosphoserine is present on Ser-2868.

It belongs to the plakin or cytolinker family. In terms of assembly, homodimer. Interacts with COL17A1 (via cytoplasmic region). Interacts with DSC2. Interacts with PKP2. Interacts with PKP1. Interacts weakly with TMEM65. Phosphorylation at Ser-2849 increases association with intermediate filament cytokeratin, potentially facilitating interaction between desmosome junctions and intermediate filament architecture. As to expression, expressed in oral mucosa (at protein level). Expressed in arrector pili muscle (at protein level). Expressed in the heart in the heart (at protein level). In terms of tissue distribution, apparently an obligate constituent of all desmosomes. Resides predominantly in tissues and cells of stratified origin.

The protein resides in the cell junction. It localises to the desmosome. Its subcellular location is the cell membrane. It is found in the cytoplasm. Its function is as follows. Major high molecular weight protein of desmosomes. Regulates profibrotic gene expression in cardiomyocytes via activation of the MAPK14/p38 MAPK signaling cascade and increase in TGFB1 protein abundance. This Homo sapiens (Human) protein is Desmoplakin (DSP).